The following is a 201-amino-acid chain: Peptidyl-tRNA hydrolase (201 aa).

Residue tyrosine 14 participates in tRNA binding. The Proton acceptor role is filled by histidine 19. Positions 64, 66, and 112 each coordinate tRNA.

The protein belongs to the PTH family. As to quaternary structure, monomer.

The protein resides in the cytoplasm. It carries out the reaction an N-acyl-L-alpha-aminoacyl-tRNA + H2O = an N-acyl-L-amino acid + a tRNA + H(+). Hydrolyzes ribosome-free peptidyl-tRNAs (with 1 or more amino acids incorporated), which drop off the ribosome during protein synthesis, or as a result of ribosome stalling. In terms of biological role, catalyzes the release of premature peptidyl moieties from peptidyl-tRNA molecules trapped in stalled 50S ribosomal subunits, and thus maintains levels of free tRNAs and 50S ribosomes. The sequence is that of Peptidyl-tRNA hydrolase from Afipia carboxidovorans (strain ATCC 49405 / DSM 1227 / KCTC 32145 / OM5) (Oligotropha carboxidovorans).